The chain runs to 248 residues: Flagellar L-ring protein (248 aa).

The N-terminal stretch at 1-23 is a signal peptide; it reads MRHAFRHSVRTLGLLGLLPVLSA. Residue C24 is the site of N-palmitoyl cysteine attachment. The S-diacylglycerol cysteine moiety is linked to residue C24.

The protein belongs to the FlgH family. As to quaternary structure, the basal body constitutes a major portion of the flagellar organelle and consists of four rings (L,P,S, and M) mounted on a central rod.

The protein localises to the cell outer membrane. It is found in the bacterial flagellum basal body. Functionally, assembles around the rod to form the L-ring and probably protects the motor/basal body from shearing forces during rotation. This is Flagellar L-ring protein from Gluconobacter oxydans (strain 621H) (Gluconobacter suboxydans).